Consider the following 793-residue polypeptide: DnaJ homolog subfamily C member 10 (793 aa).

The N-terminal stretch at 1–32 (MGVWLSKDDYIRDLKRIILCFLIVYMAILVGT) is a signal peptide. The region spanning 35–100 (DFYSLLGVSK…DLRKKYDKYG (66 aa)) is the J domain. A Thioredoxin 1 domain is found at 130–232 (EIITLERREF…ESLVSFAMQH (103 aa)). C158 and C161 are joined by a disulfide. Trxb regions lie at residues 235–350 (STVT…LPDF) and 348–463 (PDFE…PQNF). 3 consecutive Thioredoxin domains span residues 454–553 (HVTT…IEDL), 557–662 (SVVS…SLRI), and 671–778 (VSTG…INEK). Residues C480 and C483 are joined by a disulfide bond. A glycan (N-linked (GlcNAc...) asparagine) is linked at N530. 2 disulfide bridges follow: C588/C591 and C700/C703. The Prevents secretion from ER signature appears at 790–793 (KDEL).

As to quaternary structure, interacts with HSPA5 (via its J domain). Interacts with EDEM1.

Its subcellular location is the endoplasmic reticulum lumen. Its function is as follows. Endoplasmic reticulum disulfide reductase involved both in the correct folding of proteins and degradation of misfolded proteins. Required for efficient folding of proteins in the endoplasmic reticulum by catalyzing the removal of non-native disulfide bonds formed during the folding of proteins, such as LDLR. Also involved in endoplasmic reticulum-associated degradation (ERAD) by reducing incorrect disulfide bonds in misfolded glycoproteins recognized by EDEM1. Interaction with HSPA5 is required its activity, not for the disulfide reductase activity, but to facilitate the release of DNAJC10 from its substrate. Promotes apoptotic signaling pathway in response to endoplasmic reticulum stress. The polypeptide is DnaJ homolog subfamily C member 10 (DNAJC10) (Pongo abelii (Sumatran orangutan)).